We begin with the raw amino-acid sequence, 377 residues long: Putative FBD-associated F-box protein At5g44940 (377 aa).

Residues 4–50 form the F-box domain; the sequence is FDYISEFPDCLLTQILLNLPTKDSVKTSVLSKRWRNLWLNVPGLRLR. The FBD domain maps to 297-346; it reads IDFHKVPQCLISTLEYVQIEELILKEKSGIKLVDYFLENSAVLKKLTLSF.

This is Putative FBD-associated F-box protein At5g44940 from Arabidopsis thaliana (Mouse-ear cress).